A 340-amino-acid polypeptide reads, in one-letter code: Glycerol-3-phosphate dehydrogenase [NAD(P)+] (340 aa).

Positions 14, 15, 35, and 108 each coordinate NADPH. Sn-glycerol 3-phosphate contacts are provided by lysine 108 and glycine 136. Residue alanine 140 participates in NADPH binding. Sn-glycerol 3-phosphate-binding residues include lysine 191, aspartate 244, serine 254, arginine 255, and asparagine 256. Lysine 191 functions as the Proton acceptor in the catalytic mechanism. NADPH is bound at residue arginine 255. Glutamate 281 contacts NADPH.

The protein belongs to the NAD-dependent glycerol-3-phosphate dehydrogenase family.

The protein localises to the cytoplasm. The catalysed reaction is sn-glycerol 3-phosphate + NAD(+) = dihydroxyacetone phosphate + NADH + H(+). It carries out the reaction sn-glycerol 3-phosphate + NADP(+) = dihydroxyacetone phosphate + NADPH + H(+). It functions in the pathway membrane lipid metabolism; glycerophospholipid metabolism. Catalyzes the reduction of the glycolytic intermediate dihydroxyacetone phosphate (DHAP) to sn-glycerol 3-phosphate (G3P), the key precursor for phospholipid synthesis. This Pseudomonas aeruginosa (strain ATCC 15692 / DSM 22644 / CIP 104116 / JCM 14847 / LMG 12228 / 1C / PRS 101 / PAO1) protein is Glycerol-3-phosphate dehydrogenase [NAD(P)+].